We begin with the raw amino-acid sequence, 431 residues long: Enolase (431 aa).

A (2R)-2-phosphoglycerate-binding site is contributed by glutamine 164. The active-site Proton donor is glutamate 206. Residues aspartate 243, glutamate 288, and aspartate 315 each contribute to the Mg(2+) site. (2R)-2-phosphoglycerate contacts are provided by lysine 340, arginine 369, serine 370, and lysine 391. Residue lysine 340 is the Proton acceptor of the active site.

This sequence belongs to the enolase family. The cofactor is Mg(2+).

The protein resides in the cytoplasm. Its subcellular location is the secreted. It is found in the cell surface. The catalysed reaction is (2R)-2-phosphoglycerate = phosphoenolpyruvate + H2O. The protein operates within carbohydrate degradation; glycolysis; pyruvate from D-glyceraldehyde 3-phosphate: step 4/5. In terms of biological role, catalyzes the reversible conversion of 2-phosphoglycerate (2-PG) into phosphoenolpyruvate (PEP). It is essential for the degradation of carbohydrates via glycolysis. The polypeptide is Enolase (Fervidobacterium nodosum (strain ATCC 35602 / DSM 5306 / Rt17-B1)).